Consider the following 374-residue polypeptide: Arrestin domain-containing protein 15 (374 aa).

Positions 344-374 (HHLNRSKAKVSKTEQQQRKTRNIVEENPYFR) are disordered.

Belongs to the arrestin family.

The chain is Arrestin domain-containing protein 15 (arrd-15) from Caenorhabditis elegans.